The chain runs to 405 residues: Phosphoglycerate kinase (405 aa).

Residues 21-23 (DFN), arginine 36, 59-62 (HLGR), arginine 119, and arginine 161 each bind substrate. ATP-binding positions include lysine 212, glycine 301, glutamate 332, and 361 to 364 (GGDS).

It belongs to the phosphoglycerate kinase family. As to quaternary structure, monomer.

The protein resides in the cytoplasm. The catalysed reaction is (2R)-3-phosphoglycerate + ATP = (2R)-3-phospho-glyceroyl phosphate + ADP. Its pathway is carbohydrate degradation; glycolysis; pyruvate from D-glyceraldehyde 3-phosphate: step 2/5. The sequence is that of Phosphoglycerate kinase from Leuconostoc mesenteroides subsp. mesenteroides (strain ATCC 8293 / DSM 20343 / BCRC 11652 / CCM 1803 / JCM 6124 / NCDO 523 / NBRC 100496 / NCIMB 8023 / NCTC 12954 / NRRL B-1118 / 37Y).